Reading from the N-terminus, the 124-residue chain is Bactoprenol-linked glucose translocase (124 aa).

The next 4 helical transmembrane spans lie at 12–32 (FFSY…VFYA), 45–65 (NIVG…RCSF), 75–95 (FIFI…FDLL), and 96–116 (ALSP…LGYC).

Belongs to the GtrA family.

It is found in the cell membrane. Its pathway is bacterial outer membrane biogenesis; lipopolysaccharide biosynthesis. In terms of biological role, involved in O antigen modification. Involved in the translocation of bactoprenol-linked glucose across the cytoplasmic membrane. The chain is Bactoprenol-linked glucose translocase (rfbI) from Shigella flexneri.